Consider the following 361-residue polypeptide: ATP-dependent 6-phosphofructokinase 1 (361 aa).

Residues Gly-14, 79–80 (KG), and 116–119 (GDGS) each bind ATP. Asp-117 is a binding site for Mg(2+). Substrate is bound by residues 140–142 (TID), Arg-177, 184–186 (MGR), Glu-237, Arg-278, and 284–287 (HIQR). Asp-142 serves as the catalytic Proton acceptor.

Belongs to the phosphofructokinase type A (PFKA) family. Mixed-substrate PFK group III subfamily. As to quaternary structure, homodimer or homotetramer. The cofactor is Mg(2+).

It localises to the cytoplasm. It carries out the reaction beta-D-fructose 6-phosphate + ATP = beta-D-fructose 1,6-bisphosphate + ADP + H(+). Its pathway is carbohydrate degradation; glycolysis; D-glyceraldehyde 3-phosphate and glycerone phosphate from D-glucose: step 3/4. Its function is as follows. Catalyzes the phosphorylation of D-fructose 6-phosphate to fructose 1,6-bisphosphate by ATP, the first committing step of glycolysis. The polypeptide is ATP-dependent 6-phosphofructokinase 1 (Synechocystis sp. (strain ATCC 27184 / PCC 6803 / Kazusa)).